We begin with the raw amino-acid sequence, 397 residues long: Elongation factor Tu 1 (397 aa).

One can recognise a tr-type G domain in the interval 10–206 (KPHVNIGTIG…AVDENIPQPE (197 aa)). Positions 19–26 (GHIDHGKT) are G1. Position 19–26 (19–26 (GHIDHGKT)) interacts with GTP. T26 is a binding site for Mg(2+). Residues 62-66 (GITIS) form a G2 region. Residues 83-86 (DCPG) form a G3 region. Residues 83–87 (DCPGH) and 138–141 (NKAD) each bind GTP. Positions 138–141 (NKAD) are G4. A G5 region spans residues 176-178 (SAL).

The protein belongs to the TRAFAC class translation factor GTPase superfamily. Classic translation factor GTPase family. EF-Tu/EF-1A subfamily. As to quaternary structure, monomer.

The protein resides in the cytoplasm. It catalyses the reaction GTP + H2O = GDP + phosphate + H(+). GTP hydrolase that promotes the GTP-dependent binding of aminoacyl-tRNA to the A-site of ribosomes during protein biosynthesis. In Streptomyces avermitilis (strain ATCC 31267 / DSM 46492 / JCM 5070 / NBRC 14893 / NCIMB 12804 / NRRL 8165 / MA-4680), this protein is Elongation factor Tu 1.